We begin with the raw amino-acid sequence, 225 residues long: Small ribosomal subunit protein L51-b (225 aa).

Residues 1–84 (MKFPDLLRCS…QCAFISSDRF (84 aa)) constitute a mitochondrion transit peptide.

This sequence belongs to the bacterial ribosomal protein bS1 family. Component of the mitochondrial small ribosomal subunit (mt-SSU). Mature yeast 74S mitochondrial ribosomes consist of a small (37S) and a large (54S) subunit. The 37S small subunit contains a 15S ribosomal RNA (15S mt-rRNA) and at least 32 different proteins. The 54S large subunit contains a 21S rRNA (21S mt-rRNA) and at least 45 different proteins. This subunit is mutually exclusive with mrp51/small ribosomal subunit protein bS1m.

It localises to the mitochondrion. Its function is as follows. Component of the mitochondrial ribosome (mitoribosome), a dedicated translation machinery responsible for the synthesis of mitochondrial genome-encoded proteins, including at least some of the essential transmembrane subunits of the mitochondrial respiratory chain. The mitoribosomes are attached to the mitochondrial inner membrane and translation products are cotranslationally integrated into the membrane. Functionally interacts with the 5'-UTR of mitochondrial mRNAs. Specifically plays a role in the translation of cob1/cytochrome b and cox3. Has a role in meiosis. This Schizosaccharomyces pombe (strain 972 / ATCC 24843) (Fission yeast) protein is Small ribosomal subunit protein L51-b.